Here is a 188-residue protein sequence, read N- to C-terminus: Elongation factor P (188 aa).

Belongs to the elongation factor P family.

It is found in the cytoplasm. It functions in the pathway protein biosynthesis; polypeptide chain elongation. In terms of biological role, involved in peptide bond synthesis. Stimulates efficient translation and peptide-bond synthesis on native or reconstituted 70S ribosomes in vitro. Probably functions indirectly by altering the affinity of the ribosome for aminoacyl-tRNA, thus increasing their reactivity as acceptors for peptidyl transferase. The chain is Elongation factor P from Aeromonas salmonicida (strain A449).